Consider the following 307-residue polypeptide: Coproporphyrin III ferrochelatase (307 aa).

Fe-coproporphyrin III-binding positions include tyrosine 12, arginine 29, 45 to 46 (RY), serine 53, and tyrosine 124. Histidine 181 and glutamate 263 together coordinate Fe(2+).

This sequence belongs to the ferrochelatase family.

The protein localises to the cytoplasm. It catalyses the reaction Fe-coproporphyrin III + 2 H(+) = coproporphyrin III + Fe(2+). Its pathway is porphyrin-containing compound metabolism; protoheme biosynthesis. In terms of biological role, involved in coproporphyrin-dependent heme b biosynthesis. Catalyzes the insertion of ferrous iron into coproporphyrin III to form Fe-coproporphyrin III. The protein is Coproporphyrin III ferrochelatase of Staphylococcus epidermidis (strain ATCC 35984 / DSM 28319 / BCRC 17069 / CCUG 31568 / BM 3577 / RP62A).